We begin with the raw amino-acid sequence, 325 residues long: RNA ligase 1 (325 aa).

Mg(2+) serves as cofactor. Requires Mn(2+) as cofactor. In terms of processing, AMPylates itself (auto-AMPylation).

It catalyses the reaction ATP + (ribonucleotide)n-3'-hydroxyl + 5'-phospho-(ribonucleotide)m = (ribonucleotide)n+m + AMP + diphosphate.. In terms of biological role, functions as an RNA ligase, in vitro. The ligation reaction entails three nucleotidyl transfer steps. In the first step, the RNA ligase reacts with ATP in the absence of nucleic acid to form a covalent ligase-AMP intermediate and release pyrophosphate. In step 2, the ligase-AMP binds to the nucleic acid and transfers the adenylate to the 5'-PO4 terminus to form an adenylylated intermediate. In step 3, the RNA ligase directs the attack of the 3'-OH on the 5'-phosphoanhydride linkage, resulting in a repaired 3'-5' phosphodiester and release of AMP. Exhibits selectivity for single-stranded RNA substrates and may not have nick-sealing activity on double-stranded DNA-RNA hybrids. May play a role in maintaining RNA integrity under stress conditions, for example in response to reactive oxygen species (ROS). This is RNA ligase 1 from Rattus norvegicus (Rat).